The chain runs to 117 residues: Cell cycle protein GpsB (117 aa).

Residues 32–70 (LDNVIKDYDAFVKENQRLQDENERLLAKVDELTRQVQVG) are a coiled coil.

This sequence belongs to the GpsB family. As to quaternary structure, forms polymers through the coiled coil domains. Interacts with PBP1, MreC and EzrA.

Its subcellular location is the cytoplasm. Divisome component that associates with the complex late in its assembly, after the Z-ring is formed, and is dependent on DivIC and PBP2B for its recruitment to the divisome. Together with EzrA, is a key component of the system that regulates PBP1 localization during cell cycle progression. Its main role could be the removal of PBP1 from the cell pole after pole maturation is completed. Also contributes to the recruitment of PBP1 to the division complex. Not essential for septum formation. This Levilactobacillus brevis (strain ATCC 367 / BCRC 12310 / CIP 105137 / JCM 1170 / LMG 11437 / NCIMB 947 / NCTC 947) (Lactobacillus brevis) protein is Cell cycle protein GpsB.